The chain runs to 880 residues: MOG interacting and ectopic P-granules protein 1 (880 aa).

Positions 1–20 are enriched in polar residues; it reads MVTSDETVLATTTNKTSITT. Disordered stretches follow at residues 1–37, 82–257, and 350–370; these read MVTS…SETD, DKVE…DDNE, and ERPK…QHNP. Positions 23–37 are enriched in basic and acidic residues; it reads MEPKSSDESTDSETD. Over residues 87–105 the composition is skewed to polar residues; that stretch reads ATNSVVDLSSNGSSATTSV. The span at 108-120 shows a compositional bias: acidic residues; it reads EEQEEKANEDETN. Composition is skewed to basic and acidic residues over residues 154 to 170 and 183 to 193; these read SKSD…IKDS and KPEEKEEKNDT. The span at 215 to 224 shows a compositional bias: acidic residues; sequence QLDDDDDDIQ. Basic and acidic residues-rich tracts occupy residues 235–252 and 350–364; these read QKTE…KAEP and ERPK…ERQQ. C2H2-type zinc fingers lie at residues 436–459 and 465–488; these read SRCG…ETLH and FQCT…FEAH. The segment at 501–523 adopts a CCHC-type zinc-finger fold; the sequence is YPCAICEEDFNFKGVREQHYKQC. 4 C2H2-type zinc fingers span residues 728–751, 768–791, 809–830, and 841–864; these read FQCE…QVLH, LACS…VMSH, GRCK…VADH, and YSCD…SSTH.

As to quaternary structure, interacts with hda-1, let-418, lin-1, mog-1, mog-4, mog-5, mog-6, pie-1 and unc-98.

Its subcellular location is the nucleus. Its function is as follows. Has a broad role in development, specifically in the genetic pathway SynMuvB that negatively regulates specification of the vulval cell fate. Required for fem-3 3'-UTR-mediated repression in the regulation of the sperm/oocyte switch. Acts by regulating the translation of fem-3 mRNA, by binding to its 3'-UTR. This Caenorhabditis briggsae protein is MOG interacting and ectopic P-granules protein 1.